A 141-amino-acid polypeptide reads, in one-letter code: Hemoglobin subunit alpha-1/2 (141 aa).

Residues 1–141 form the Globin domain; that stretch reads VLSPADKTNV…VSTVLTSKYR (141 aa). Residue serine 3 is modified to Phosphoserine. Residue lysine 7 is modified to N6-succinyllysine. Phosphothreonine is present on threonine 8. Residue lysine 11 is modified to N6-succinyllysine. Residue lysine 16 is modified to N6-acetyllysine; alternate. An N6-succinyllysine; alternate modification is found at lysine 16. Tyrosine 24 bears the Phosphotyrosine mark. Lysine 40 bears the N6-succinyllysine mark. Phosphoserine is present on serine 49. Residue histidine 58 coordinates O2. Histidine 87 is a heme b binding site. At serine 102 the chain carries Phosphoserine. Phosphothreonine is present on threonine 108. Serine 124 carries the phosphoserine modification. Phosphothreonine occurs at positions 134 and 137. Serine 138 is modified (phosphoserine).

The protein belongs to the globin family. As to quaternary structure, heterotetramer of two alpha chains and two beta chains. Red blood cells.

Involved in oxygen transport from the lung to the various peripheral tissues. This is Hemoglobin subunit alpha-1/2 from Leptonychotes weddellii (Weddell seal).